A 354-amino-acid chain; its full sequence is UDP-3-O-acylglucosamine N-acyltransferase (354 aa).

The active-site Proton acceptor is His247.

The protein belongs to the transferase hexapeptide repeat family. LpxD subfamily. In terms of assembly, homotrimer.

It carries out the reaction a UDP-3-O-[(3R)-3-hydroxyacyl]-alpha-D-glucosamine + a (3R)-hydroxyacyl-[ACP] = a UDP-2-N,3-O-bis[(3R)-3-hydroxyacyl]-alpha-D-glucosamine + holo-[ACP] + H(+). Its pathway is bacterial outer membrane biogenesis; LPS lipid A biosynthesis. Its function is as follows. Catalyzes the N-acylation of UDP-3-O-acylglucosamine using 3-hydroxyacyl-ACP as the acyl donor. Is involved in the biosynthesis of lipid A, a phosphorylated glycolipid that anchors the lipopolysaccharide to the outer membrane of the cell. The sequence is that of UDP-3-O-acylglucosamine N-acyltransferase from Chlamydia trachomatis serovar A (strain ATCC VR-571B / DSM 19440 / HAR-13).